A 424-amino-acid polypeptide reads, in one-letter code: Tyrosine--tRNA ligase (424 aa).

Position 37 (Tyr-37) interacts with L-tyrosine. Positions Pro-42–His-51 match the 'HIGH' region motif. L-tyrosine contacts are provided by Tyr-175 and Gln-179. Positions Lys-235–Thr-239 match the 'KMSKS' region motif. Lys-238 serves as a coordination point for ATP. Residues Ala-357–Gly-414 enclose the S4 RNA-binding domain.

It belongs to the class-I aminoacyl-tRNA synthetase family. TyrS type 1 subfamily. Homodimer.

The protein localises to the cytoplasm. It catalyses the reaction tRNA(Tyr) + L-tyrosine + ATP = L-tyrosyl-tRNA(Tyr) + AMP + diphosphate + H(+). In terms of biological role, catalyzes the attachment of tyrosine to tRNA(Tyr) in a two-step reaction: tyrosine is first activated by ATP to form Tyr-AMP and then transferred to the acceptor end of tRNA(Tyr). The protein is Tyrosine--tRNA ligase of Hamiltonella defensa subsp. Acyrthosiphon pisum (strain 5AT).